The primary structure comprises 127 residues: MVQGPTTHRNLDDSPAGPLLILSPCAGTPTRVPAAPDAPDFRLPCHFGRPTRKRGPSTPPLSSPGKVCATGPRRVYSVTVCCGHCGKDLTFAVKTGSTTLLGFEHLLNSDLDLLCPRCESRERHGKR.

The tract at residues 2–56 (VQGPTTHRNLDDSPAGPLLILSPCAGTPTRVPAAPDAPDFRLPCHFGRPTRKRGP) is E7 terminal domain. The tract at residues 33 to 66 (PAAPDAPDFRLPCHFGRPTRKRGPSTPPLSSPGK) is disordered. The segment at 82–118 (CGHCGKDLTFAVKTGSTTLLGFEHLLNSDLDLLCPRC) is a zinc-finger region. A Nuclear export signal motif is present at residues 100-108 (LLGFEHLLN).

This sequence belongs to the papillomaviridae E7 protein family. In terms of assembly, homodimer. Homooligomer. Interacts with host RB1; this interaction induces dissociation of RB1-E2F1 complex thereby disrupting RB1 activity. Interacts with host EP300; this interaction represses EP300 transcriptional activity. Interacts with protein E2; this interaction inhibits E7 oncogenic activity. Interacts with host TMEM173/STING; this interaction impairs the ability of TMEM173/STING to sense cytosolic DNA and promote the production of type I interferon (IFN-alpha and IFN-beta). In terms of processing, highly phosphorylated.

The protein localises to the host cytoplasm. Its subcellular location is the host nucleus. In terms of biological role, plays a role in viral genome replication by driving entry of quiescent cells into the cell cycle. Stimulation of progression from G1 to S phase allows the virus to efficiently use the cellular DNA replicating machinery to achieve viral genome replication. E7 protein has both transforming and trans-activating activities. Induces the disassembly of the E2F1 transcription factor from RB1, with subsequent transcriptional activation of E2F1-regulated S-phase genes. Interferes with host histone deacetylation mediated by HDAC1 and HDAC2, leading to transcription activation. Also plays a role in the inhibition of both antiviral and antiproliferative functions of host interferon alpha. Interaction with host TMEM173/STING impairs the ability of TMEM173/STING to sense cytosolic DNA and promote the production of type I interferon (IFN-alpha and IFN-beta). This chain is Protein E7, found in Bos taurus (Bovine).